Here is a 430-residue protein sequence, read N- to C-terminus: Histidinol dehydrogenase (430 aa).

Residues Tyr-124, Gln-185, and Asn-208 each contribute to the NAD(+) site. Positions 233, 255, and 258 each coordinate substrate. Zn(2+) contacts are provided by Gln-255 and His-258. Active-site proton acceptor residues include Glu-324 and His-325. His-325, Asp-358, Glu-412, and His-418 together coordinate substrate. Position 358 (Asp-358) interacts with Zn(2+). Residue His-418 coordinates Zn(2+).

Belongs to the histidinol dehydrogenase family. The cofactor is Zn(2+).

It catalyses the reaction L-histidinol + 2 NAD(+) + H2O = L-histidine + 2 NADH + 3 H(+). The protein operates within amino-acid biosynthesis; L-histidine biosynthesis; L-histidine from 5-phospho-alpha-D-ribose 1-diphosphate: step 9/9. Catalyzes the sequential NAD-dependent oxidations of L-histidinol to L-histidinaldehyde and then to L-histidine. The chain is Histidinol dehydrogenase from Leptospira biflexa serovar Patoc (strain Patoc 1 / Ames).